The following is a 194-amino-acid chain: Metalloproteinase inhibitor 2 (194 aa).

Cys1 contacts Zn(2+). Involved in metalloproteinase-binding regions lie at residues 1–4 (CSCS) and 69–70 (SA). 6 disulfide bridges follow: Cys1–Cys72, Cys3–Cys101, Cys13–Cys126, Cys128–Cys175, Cys133–Cys138, and Cys146–Cys167. In terms of domain architecture, NTR spans 1–126 (CSCSPVHPQQ…SLNHRYQMGC (126 aa)).

The protein belongs to the protease inhibitor I35 (TIMP) family. Interacts (via the C-terminal) with MMP2 (via the C-terminal PEX domain); the interaction inhibits the MMP2 activity. The activity of TIMP2 is dependent on the presence of disulfide bonds.

The protein localises to the secreted. Functionally, complexes with metalloproteinases (such as collagenases) and irreversibly inactivates them by binding to their catalytic zinc cofactor. The sequence is that of Metalloproteinase inhibitor 2 (TIMP2) from Oryctolagus cuniculus (Rabbit).